The chain runs to 162 residues: MSTNPKPQRKKPNVTPTVAHRTSSSRVAVRSLVEFTCCRAGALDWVCARRGRLPSGRNLEVDVSLSPRHVGPRAGPGLSPGTLGPSMAMRVAGGRDGSCLPVALGLAGAPQTPGVGRAIWVRSSIPLRAASPTSWGTYRSSAPLLEALPGPWRMASGFWKTA.

A disordered region spans residues 1–23 (MSTNPKPQRKKPNVTPTVAHRTS). Positions 14-23 (VTPTVAHRTS) are enriched in polar residues.

It localises to the host cytoplasm. The protein resides in the host perinuclear region. In terms of biological role, contributes to the RIGI-mediated inhibition of type I interferon production. The chain is F protein from Homo sapiens (Human).